Consider the following 480-residue polypeptide: Vacuolar protein sorting-associated protein 9A (480 aa).

A VPS9 domain is found at 111–255; that stretch reads VKSDEELFEK…IWNIDGESLS (145 aa). Asn-189 and Asp-194 together coordinate GTP. The span at 276–288 shows a compositional bias: polar residues; sequence SASSENQDNQNNL. 2 disordered regions span residues 276-338 and 418-480; these read SASS…VQSI and ESEE…PEHA. Residues 289–305 show a composition bias toward basic and acidic residues; sequence DVREQKSQTLKASRDSD. Polar residues-rich tracts occupy residues 327–338, 427–437, and 451–461; these read ASSNPVERVQSI, NAVNFSEGSSK, and VDNTGTQQTAV.

In terms of assembly, interacts with RAB5A. Interacts with GPA3 (via C-terminus).

It is found in the cytoplasm. The protein resides in the golgi apparatus. It localises to the trans-Golgi network. The protein localises to the prevacuolar compartment. Functionally, functions as a guanine nucleotide exchange factor (GEF) for Rab small GTPases. Activates specifically RAB5A protein. Functions cooperatively with RAB5A to regulate post-Golgi dense vesicle-mediated transport of storage proteins to the type II protein bodies (PBII) protein storage vacuoles in developing endosperm. The chain is Vacuolar protein sorting-associated protein 9A from Oryza sativa subsp. japonica (Rice).